A 465-amino-acid chain; its full sequence is Fumarate hydratase class II (465 aa).

Substrate is bound by residues 98–100 (SGT), arginine 126, 129–132 (HPND), 139–141 (SSN), and threonine 187. Histidine 188 serves as the catalytic Proton donor/acceptor. Residue serine 318 is part of the active site. Substrate is bound by residues serine 319 and 324–326 (KVN).

The protein belongs to the class-II fumarase/aspartase family. Fumarase subfamily. As to quaternary structure, homotetramer.

Its subcellular location is the cytoplasm. The enzyme catalyses (S)-malate = fumarate + H2O. It participates in carbohydrate metabolism; tricarboxylic acid cycle; (S)-malate from fumarate: step 1/1. In terms of biological role, involved in the TCA cycle. Catalyzes the stereospecific interconversion of fumarate to L-malate. This chain is Fumarate hydratase class II, found in Yersinia pestis.